The chain runs to 247 residues: 2,3-bisphosphoglycerate-dependent phosphoglycerate mutase (247 aa).

Substrate-binding positions include 8–15, 21–22, arginine 60, 87–90, lysine 98, 114–115, and 183–184; these read RHGESQWN, TG, ERHY, RR, and GN. The active-site Tele-phosphohistidine intermediate is histidine 9. The active-site Proton donor/acceptor is the glutamate 87.

This sequence belongs to the phosphoglycerate mutase family. BPG-dependent PGAM subfamily.

It catalyses the reaction (2R)-2-phosphoglycerate = (2R)-3-phosphoglycerate. Its pathway is carbohydrate degradation; glycolysis; pyruvate from D-glyceraldehyde 3-phosphate: step 3/5. Functionally, catalyzes the interconversion of 2-phosphoglycerate and 3-phosphoglycerate. The polypeptide is 2,3-bisphosphoglycerate-dependent phosphoglycerate mutase (Chlorobaculum parvum (strain DSM 263 / NCIMB 8327) (Chlorobium vibrioforme subsp. thiosulfatophilum)).